The primary structure comprises 363 residues: Autophagy-related protein 3 (363 aa).

2 stretches are compositionally biased toward basic and acidic residues: residues 84–106 (DFAGDAGHDETVVRDGEDFRGDG) and 129–138 (ARVRDVRTVD). The interval 84 to 171 (DFAGDAGHDE…DDEAIIRDPK (88 aa)) is flexible region. The tract at residues 84 to 174 (DFAGDAGHDE…AIIRDPKADN (91 aa)) is disordered. Acidic residues predominate over residues 139-164 (ESGEMGEREDDEDDIPDMEDDDDDDE). The Glycyl thioester intermediate role is filled by cysteine 247. The interval 251–339 (SVMKTLLDRA…EEEVAIRVDQ (89 aa)) is handle region.

This sequence belongs to the ATG3 family. As to quaternary structure, monomer. Interacts with atg8 through an intermediate thioester bond through the C-terminal Gly of atg8. Interacts with the C-terminal region of the E1-like atg7 enzyme. Also interacts with the atg12-atg5 conjugate.

It localises to the cytoplasm. In terms of biological role, E2 conjugating enzyme required for the cytoplasm to vacuole transport (Cvt) and autophagy. Required for selective autophagic degradation of the nucleus (nucleophagy) as well as for mitophagy which contributes to regulate mitochondrial quantity and quality by eliminating the mitochondria to a basal level to fulfill cellular energy requirements and preventing excess ROS production. Responsible for the E2-like covalent binding of phosphatidylethanolamine to the C-terminal Gly of atg8. The atg12-atg5 conjugate plays a role of an E3 and promotes the transfer of atg8 from atg3 to phosphatidylethanolamine (PE). This step is required for the membrane association of atg8. The formation of the atg8-phosphatidylethanolamine conjugate is essential for autophagy and for the cytoplasm to vacuole transport (Cvt). The atg8-PE conjugate mediates tethering between adjacent membranes and stimulates membrane hemifusion, leading to expansion of the autophagosomal membrane during autophagy. Required for normal mycelial growth and conidiogenesis, and regulates sclerotial formation. Plays an essential role in pathogenesis. The polypeptide is Autophagy-related protein 3 (Botryotinia fuckeliana (strain BcDW1) (Noble rot fungus)).